A 391-amino-acid chain; its full sequence is Nicotinate phosphoribosyltransferase (391 aa).

Histidine 216 is subject to Phosphohistidine; by autocatalysis.

This sequence belongs to the NAPRTase family. In terms of processing, transiently phosphorylated on a His residue during the reaction cycle. Phosphorylation strongly increases the affinity for substrates and increases the rate of nicotinate D-ribonucleotide production. Dephosphorylation regenerates the low-affinity form of the enzyme, leading to product release.

It carries out the reaction nicotinate + 5-phospho-alpha-D-ribose 1-diphosphate + ATP + H2O = nicotinate beta-D-ribonucleotide + ADP + phosphate + diphosphate. The protein operates within cofactor biosynthesis; NAD(+) biosynthesis; nicotinate D-ribonucleotide from nicotinate: step 1/1. In terms of biological role, catalyzes the synthesis of beta-nicotinate D-ribonucleotide from nicotinate and 5-phospho-D-ribose 1-phosphate at the expense of ATP. This chain is Nicotinate phosphoribosyltransferase, found in Bordetella petrii (strain ATCC BAA-461 / DSM 12804 / CCUG 43448).